The chain runs to 388 residues: Succinyl-diaminopimelate desuccinylase (388 aa).

Position 71 (H71) interacts with Zn(2+). D73 is an active-site residue. D104 serves as a coordination point for Zn(2+). E143 serves as the catalytic Proton acceptor. The Zn(2+) site is built by E144, E172, and H361.

This sequence belongs to the peptidase M20A family. DapE subfamily. Homodimer. Requires Zn(2+) as cofactor. The cofactor is Co(2+).

The catalysed reaction is N-succinyl-(2S,6S)-2,6-diaminopimelate + H2O = (2S,6S)-2,6-diaminopimelate + succinate. The protein operates within amino-acid biosynthesis; L-lysine biosynthesis via DAP pathway; LL-2,6-diaminopimelate from (S)-tetrahydrodipicolinate (succinylase route): step 3/3. Functionally, catalyzes the hydrolysis of N-succinyl-L,L-diaminopimelic acid (SDAP), forming succinate and LL-2,6-diaminopimelate (DAP), an intermediate involved in the bacterial biosynthesis of lysine and meso-diaminopimelic acid, an essential component of bacterial cell walls. The sequence is that of Succinyl-diaminopimelate desuccinylase from Bradyrhizobium diazoefficiens (strain JCM 10833 / BCRC 13528 / IAM 13628 / NBRC 14792 / USDA 110).